A 109-amino-acid chain; its full sequence is MENFKLKIKKEDKVKVLTGKDKGKIGKVLKVLRKKNRAVVENINVAKIHQRPTQANPQGGIVDKPMPVDCSNLMIMCNSCIKPVRVGIKQLEDGKKVRICKSCNEQIDA.

The protein belongs to the universal ribosomal protein uL24 family. As to quaternary structure, part of the 50S ribosomal subunit.

Functionally, one of two assembly initiator proteins, it binds directly to the 5'-end of the 23S rRNA, where it nucleates assembly of the 50S subunit. Its function is as follows. One of the proteins that surrounds the polypeptide exit tunnel on the outside of the subunit. This is Large ribosomal subunit protein uL24 from Desulforapulum autotrophicum (strain ATCC 43914 / DSM 3382 / VKM B-1955 / HRM2) (Desulfobacterium autotrophicum).